Reading from the N-terminus, the 196-residue chain is Corrinoid adenosyltransferase (196 aa).

36–42 serves as a coordination point for ATP; the sequence is GNGKGKT.

Belongs to the Cob(I)alamin adenosyltransferase family.

The protein localises to the cytoplasm. The catalysed reaction is 2 cob(II)yrinate a,c diamide + reduced [electron-transfer flavoprotein] + 2 ATP = 2 adenosylcob(III)yrinate a,c-diamide + 2 triphosphate + oxidized [electron-transfer flavoprotein] + 3 H(+). The enzyme catalyses 2 cob(II)alamin + reduced [electron-transfer flavoprotein] + 2 ATP = 2 adenosylcob(III)alamin + 2 triphosphate + oxidized [electron-transfer flavoprotein] + 3 H(+). The protein operates within cofactor biosynthesis; adenosylcobalamin biosynthesis; adenosylcobalamin from cob(II)yrinate a,c-diamide: step 2/7. Required for both de novo synthesis of the corrin ring for the assimilation of exogenous corrinoids. Participates in the adenosylation of a variety of incomplete and complete corrinoids. The sequence is that of Corrinoid adenosyltransferase (btuR) from Escherichia coli O6:H1 (strain CFT073 / ATCC 700928 / UPEC).